A 69-amino-acid chain; its full sequence is Ferredoxin-1 (69 aa).

[3Fe-4S] cluster-binding residues include Cys12, Cys18, and Cys57.

[3Fe-4S] cluster serves as cofactor.

Functionally, electron transport protein for the cytochrome P-450-SU1 system. The polypeptide is Ferredoxin-1 (suaB) (Streptomyces griseolus).